A 154-amino-acid polypeptide reads, in one-letter code: RxLR effector protein PexRD24 (154 aa).

Positions 1–22 are cleaved as a signal peptide; it reads MHSSLLWLGAVVALLAVNNVTA. A RxLR-dEER motif is present at residues 53–67; sequence RSLRAVETSEDEEER. A short sequence motif (PP1c-binding motif) is located at residue K138.

This sequence belongs to the RxLR effector family. In terms of assembly, interacts with the potato PP1c family proteins PP1c-1, PP1c-2 and PP1c-3.

Its subcellular location is the secreted. It localises to the host nucleus. The protein resides in the host nucleoplasm. The protein localises to the host nucleolus. Functionally, effector that interacts with isoforms of host protein phosphatase type 1c (PP1c), mimicking a regulatory subunit and causing their re-localization within the host nucleus. The holoenzymes formed with PP1c isoforms act to promote late blight by attenuating jasmonic acid (JA)- and salicylic acid (SA)-mediated transcriptional responses of the host plant. The sequence is that of RxLR effector protein PexRD24 from Phytophthora infestans (strain T30-4) (Potato late blight agent).